The chain runs to 163 residues: UPF0262 protein RPA4530 (163 aa).

This sequence belongs to the UPF0262 family.

This chain is UPF0262 protein RPA4530, found in Rhodopseudomonas palustris (strain ATCC BAA-98 / CGA009).